Consider the following 416-residue polypeptide: Pectin acetylesterase 10 (416 aa).

Positions M1–A20 are cleaved as a signal peptide. N27 carries an N-linked (GlcNAc...) asparagine glycan. Catalysis depends on charge relay system residues S198, D294, and H361.

The protein belongs to the pectinacetylesterase family.

The protein localises to the secreted. The protein resides in the cell wall. Its function is as follows. Hydrolyzes acetyl esters in homogalacturonan regions of pectin. In type I primary cell wall, galacturonic acid residues of pectin can be acetylated at the O-2 and O-3 positions. Decreasing the degree of acetylation of pectin gels in vitro alters their physical properties. The protein is Pectin acetylesterase 10 of Arabidopsis thaliana (Mouse-ear cress).